The following is a 332-amino-acid chain: DNA-directed RNA polymerase subunit alpha (332 aa).

Residues 1–226 are alpha N-terminal domain (alpha-NTD); that stretch reads MLIAQRPTLT…ELFGLCRELN (226 aa). Residues 245-332 form an alpha C-terminal domain (alpha-CTD) region; the sequence is PEMNIPIEDL…GGTFFSPEDE (88 aa).

Belongs to the RNA polymerase alpha chain family. Homodimer. The RNAP catalytic core consists of 2 alpha, 1 beta, 1 beta' and 1 omega subunit. When a sigma factor is associated with the core the holoenzyme is formed, which can initiate transcription.

It carries out the reaction RNA(n) + a ribonucleoside 5'-triphosphate = RNA(n+1) + diphosphate. DNA-dependent RNA polymerase catalyzes the transcription of DNA into RNA using the four ribonucleoside triphosphates as substrates. The protein is DNA-directed RNA polymerase subunit alpha of Bifidobacterium adolescentis (strain ATCC 15703 / DSM 20083 / NCTC 11814 / E194a).